The sequence spans 165 residues: Transcriptional repressor NrdR (165 aa).

Residues 3-34 (CPFCSANDTKVIDSRLVSDGHQVRRRRECLAC) fold into a zinc finger. Positions 49–139 (PRIIKRDGSR…VYLSFEDISE (91 aa)) constitute an ATP-cone domain.

It belongs to the NrdR family. It depends on Zn(2+) as a cofactor.

Its function is as follows. Negatively regulates transcription of bacterial ribonucleotide reductase nrd genes and operons by binding to NrdR-boxes. In Colwellia psychrerythraea (strain 34H / ATCC BAA-681) (Vibrio psychroerythus), this protein is Transcriptional repressor NrdR.